The sequence spans 228 residues: MIGIIGAMEEEVAILKDKIVNLEIINVAHVVFYKGRLHDKEVILTQSGIGKVNVAISTTLLINRFHPDLIINTGSAGALDKSLGVGDIIVSDMVAYHDADARAFGYQLGQIPQMPAQFVADSHLIELAKEAINDQKWVAKSGLIVSGDSFIGTAEQRADIKTNFPQAMAAEMEATAIAQTCYQFNLPFIITRAISDLADGDAGITFEAFLEKAAIASSQIVDRLIKTI.

The active-site Proton acceptor is the Glu11. Residues Gly77, Ile151, and 172–173 (ME) each bind substrate. Asp196 functions as the Proton donor in the catalytic mechanism.

Belongs to the PNP/UDP phosphorylase family. MtnN subfamily.

It carries out the reaction S-adenosyl-L-homocysteine + H2O = S-(5-deoxy-D-ribos-5-yl)-L-homocysteine + adenine. It catalyses the reaction S-methyl-5'-thioadenosine + H2O = 5-(methylsulfanyl)-D-ribose + adenine. The enzyme catalyses 5'-deoxyadenosine + H2O = 5-deoxy-D-ribose + adenine. Its pathway is amino-acid biosynthesis; L-methionine biosynthesis via salvage pathway; S-methyl-5-thio-alpha-D-ribose 1-phosphate from S-methyl-5'-thioadenosine (hydrolase route): step 1/2. Functionally, catalyzes the irreversible cleavage of the glycosidic bond in both 5'-methylthioadenosine (MTA) and S-adenosylhomocysteine (SAH/AdoHcy) to adenine and the corresponding thioribose, 5'-methylthioribose and S-ribosylhomocysteine, respectively. Also cleaves 5'-deoxyadenosine, a toxic by-product of radical S-adenosylmethionine (SAM) enzymes, into 5-deoxyribose and adenine. The protein is 5'-methylthioadenosine/S-adenosylhomocysteine nucleosidase of Staphylococcus saprophyticus subsp. saprophyticus (strain ATCC 15305 / DSM 20229 / NCIMB 8711 / NCTC 7292 / S-41).